We begin with the raw amino-acid sequence, 418 residues long: UDP-N-acetylglucosamine 1-carboxyvinyltransferase (418 aa).

Lysine 22–asparagine 23 is a phosphoenolpyruvate binding site. Arginine 92 lines the UDP-N-acetyl-alpha-D-glucosamine pocket. Cysteine 116 functions as the Proton donor in the catalytic mechanism. 2-(S-cysteinyl)pyruvic acid O-phosphothioketal is present on cysteine 116. UDP-N-acetyl-alpha-D-glucosamine contacts are provided by residues arginine 121–leucine 125, aspartate 305, and isoleucine 327.

The protein belongs to the EPSP synthase family. MurA subfamily.

Its subcellular location is the cytoplasm. The enzyme catalyses phosphoenolpyruvate + UDP-N-acetyl-alpha-D-glucosamine = UDP-N-acetyl-3-O-(1-carboxyvinyl)-alpha-D-glucosamine + phosphate. Its pathway is cell wall biogenesis; peptidoglycan biosynthesis. In terms of biological role, cell wall formation. Adds enolpyruvyl to UDP-N-acetylglucosamine. The chain is UDP-N-acetylglucosamine 1-carboxyvinyltransferase from Acidiphilium cryptum (strain JF-5).